The sequence spans 245 residues: Small ribosomal subunit protein uS2 (245 aa).

Belongs to the universal ribosomal protein uS2 family.

The polypeptide is Small ribosomal subunit protein uS2 (Pseudomonas putida (strain GB-1)).